Reading from the N-terminus, the 192-residue chain is Probable GTP-binding protein EngB (192 aa).

Positions 22–192 (NLPQIVIVGR…QVLSIFEKYA (171 aa)) constitute an EngB-type G domain. Residues 30-37 (GRSNVGKS), 57-61 (GKTRG), 75-78 (DLPG), 142-145 (TKAD), and 173-175 (FSA) contribute to the GTP site. Mg(2+) contacts are provided by Ser-37 and Thr-59.

Belongs to the TRAFAC class TrmE-Era-EngA-EngB-Septin-like GTPase superfamily. EngB GTPase family. Mg(2+) serves as cofactor.

Necessary for normal cell division and for the maintenance of normal septation. This Thermoanaerobacter pseudethanolicus (strain ATCC 33223 / 39E) (Clostridium thermohydrosulfuricum) protein is Probable GTP-binding protein EngB.